The following is a 245-amino-acid chain: Probable 2-phosphosulfolactate phosphatase (245 aa).

It belongs to the ComB family. The cofactor is Mg(2+).

The enzyme catalyses (2R)-O-phospho-3-sulfolactate + H2O = (2R)-3-sulfolactate + phosphate. The polypeptide is Probable 2-phosphosulfolactate phosphatase (Trichormus variabilis (strain ATCC 29413 / PCC 7937) (Anabaena variabilis)).